Reading from the N-terminus, the 188-residue chain is ATP synthase subunit b 1 (188 aa).

Residues 7-27 (LSVLALAMLAANPAFAAGGGI) traverse the membrane as a helical segment.

Belongs to the ATPase B chain family. As to quaternary structure, F-type ATPases have 2 components, F(1) - the catalytic core - and F(0) - the membrane proton channel. F(1) has five subunits: alpha(3), beta(3), gamma(1), delta(1), epsilon(1). F(0) has three main subunits: a(1), b(2) and c(10-14). The alpha and beta chains form an alternating ring which encloses part of the gamma chain. F(1) is attached to F(0) by a central stalk formed by the gamma and epsilon chains, while a peripheral stalk is formed by the delta and b chains.

The protein resides in the cell inner membrane. F(1)F(0) ATP synthase produces ATP from ADP in the presence of a proton or sodium gradient. F-type ATPases consist of two structural domains, F(1) containing the extramembraneous catalytic core and F(0) containing the membrane proton channel, linked together by a central stalk and a peripheral stalk. During catalysis, ATP synthesis in the catalytic domain of F(1) is coupled via a rotary mechanism of the central stalk subunits to proton translocation. Its function is as follows. Component of the F(0) channel, it forms part of the peripheral stalk, linking F(1) to F(0). This Roseobacter denitrificans (strain ATCC 33942 / OCh 114) (Erythrobacter sp. (strain OCh 114)) protein is ATP synthase subunit b 1.